The primary structure comprises 691 residues: Elongation factor G (691 aa).

In terms of domain architecture, tr-type G spans 8–283 (EDYRNFGIMA…AVVDYLPSPV (276 aa)). Residues 17 to 24 (AHIDAGKT), 81 to 85 (DTPGH), and 135 to 138 (NKMD) contribute to the GTP site.

The protein belongs to the TRAFAC class translation factor GTPase superfamily. Classic translation factor GTPase family. EF-G/EF-2 subfamily.

The protein resides in the cytoplasm. Functionally, catalyzes the GTP-dependent ribosomal translocation step during translation elongation. During this step, the ribosome changes from the pre-translocational (PRE) to the post-translocational (POST) state as the newly formed A-site-bound peptidyl-tRNA and P-site-bound deacylated tRNA move to the P and E sites, respectively. Catalyzes the coordinated movement of the two tRNA molecules, the mRNA and conformational changes in the ribosome. The protein is Elongation factor G of Methylorubrum populi (strain ATCC BAA-705 / NCIMB 13946 / BJ001) (Methylobacterium populi).